The following is a 423-amino-acid chain: Glutaminase (423 aa).

Residues 27–312 are glutaminase; it reads GEVAQYIPQL…LSEDMGLHLM (286 aa). Substrate is bound by residues serine 69, asparagine 119, glutamate 165, asparagine 172, tyrosine 196, tyrosine 248, and valine 266. Residues 321-423 enclose the STAS domain; sequence AVRAIEERGD…SPQVDDPEEL (103 aa).

This sequence belongs to the glutaminase family. In terms of assembly, homotetramer.

The catalysed reaction is L-glutamine + H2O = L-glutamate + NH4(+). The chain is Glutaminase (glsA) from Corynebacterium efficiens (strain DSM 44549 / YS-314 / AJ 12310 / JCM 11189 / NBRC 100395).